A 122-amino-acid chain; its full sequence is Large ribosomal subunit protein uL14c (122 aa).

This sequence belongs to the universal ribosomal protein uL14 family. Part of the 50S ribosomal subunit.

The protein resides in the plastid. It localises to the chloroplast. In terms of biological role, binds to 23S rRNA. The polypeptide is Large ribosomal subunit protein uL14c (Daucus carota (Wild carrot)).